A 206-amino-acid polypeptide reads, in one-letter code: Probable nicotinate-nucleotide adenylyltransferase (206 aa).

The protein belongs to the NadD family.

It catalyses the reaction nicotinate beta-D-ribonucleotide + ATP + H(+) = deamido-NAD(+) + diphosphate. Its pathway is cofactor biosynthesis; NAD(+) biosynthesis; deamido-NAD(+) from nicotinate D-ribonucleotide: step 1/1. In terms of biological role, catalyzes the reversible adenylation of nicotinate mononucleotide (NaMN) to nicotinic acid adenine dinucleotide (NaAD). This is Probable nicotinate-nucleotide adenylyltransferase from Paenarthrobacter aurescens (strain TC1).